Reading from the N-terminus, the 199-residue chain is Golgi to ER traffic protein 1 (199 aa).

Residues 1-11 (MLLPDLHPYTI) are Lumenal-facing. A helical membrane pass occupies residues 12–31 (LLSIFIVLLLKQLVASIGKS). At 32-115 (TIKEFVWLVY…SIDKVSNALL (84 aa)) the chain is on the cytoplasmic side. The stretch at 66–116 (EKRAISAQDEYAKWTKLNRQADKLSAELQKLNQEIQQQKASIDKVSNALLL) forms a coiled coil. A helical transmembrane segment spans residues 116–136 (LVLTTLPIWVARVLYRNTHLF). The Lumenal segment spans residues 137 to 160 (YIRQGIFPKYVEWVLALPFLPNGA). A helical membrane pass occupies residues 161–177 (VGLTIWMFAVNSVVSNF). The Cytoplasmic portion of the chain corresponds to 178–199 (AFLVSFPFAKKVSKPVRDTKIE).

The protein belongs to the WRB/GET1 family. As to quaternary structure, component of the Golgi to ER traffic (GET) complex, which is composed of GET1, GET2 and GET3. Within the complex, GET1 and GET2 form a heterotetramer which is stabilized by phosphatidylinositol binding and which binds to the GET3 homodimer.

The protein localises to the endoplasmic reticulum membrane. The protein resides in the golgi apparatus membrane. Functionally, required for the post-translational delivery of tail-anchored (TA) proteins to the endoplasmic reticulum. Together with GET2, acts as a membrane receptor for soluble GET3, which recognizes and selectively binds the transmembrane domain of TA proteins in the cytosol. The GET complex cooperates with the HDEL receptor ERD2 to mediate the ATP-dependent retrieval of resident ER proteins that contain a C-terminal H-D-E-L retention signal from the Golgi to the ER. The chain is Golgi to ER traffic protein 1 from Candida dubliniensis (strain CD36 / ATCC MYA-646 / CBS 7987 / NCPF 3949 / NRRL Y-17841) (Yeast).